Consider the following 373-residue polypeptide: UDP-3-O-acylglucosamine N-acyltransferase 2 (373 aa).

His257 acts as the Proton acceptor in catalysis. The segment at 346–373 is disordered; it reads DGRTAASAEAAAPSSDATGVDQPDQAAS. Residues 350-362 are compositionally biased toward low complexity; the sequence is AASAEAAAPSSDA.

It belongs to the transferase hexapeptide repeat family. LpxD subfamily. In terms of assembly, homotrimer.

It catalyses the reaction a UDP-3-O-[(3R)-3-hydroxyacyl]-alpha-D-glucosamine + a (3R)-hydroxyacyl-[ACP] = a UDP-2-N,3-O-bis[(3R)-3-hydroxyacyl]-alpha-D-glucosamine + holo-[ACP] + H(+). It participates in bacterial outer membrane biogenesis; LPS lipid A biosynthesis. In terms of biological role, catalyzes the N-acylation of UDP-3-O-acylglucosamine using 3-hydroxyacyl-ACP as the acyl donor. Is involved in the biosynthesis of lipid A, a phosphorylated glycolipid that anchors the lipopolysaccharide to the outer membrane of the cell. In Rhodopseudomonas palustris (strain BisB18), this protein is UDP-3-O-acylglucosamine N-acyltransferase 2.